A 709-amino-acid chain; its full sequence is Homeobox-leucine zipper protein TF1 (709 aa).

A DNA-binding region (homeobox) is located at residues 66–125 (RKRRLQRLTGKQSEVLEGFFSICGHPDDGQKRHLSETTGLGLDQVKFWFQNKRTQVKTMC). Residues 166–187 (NQLAVEMERLMGQSEWLQQEIA) are a coiled coil. An START domain is found at 212 to 441 (GQHDQQMIAE…MARQSARMRD (230 aa)).

Belongs to the HD-ZIP homeobox family. Class IV subfamily.

The protein localises to the nucleus. Probable transcription factor. This is Homeobox-leucine zipper protein TF1 (TF1) from Oryza sativa subsp. japonica (Rice).